The sequence spans 584 residues: Asparagine synthetase [glutamine-hydrolyzing] 1 (584 aa).

Cys-2 serves as the catalytic For GATase activity. A Glutamine amidotransferase type-2 domain is found at Cys-2–Gly-185. L-glutamine is bound by residues Arg-50–Ile-54, Asn-75–Glu-77, and Asp-98. Positions Pro-193–Pro-516 constitute an Asparagine synthetase domain. ATP is bound by residues Leu-231, Val-267, and Ser-341–Gly-342.

The enzyme catalyses L-aspartate + L-glutamine + ATP + H2O = L-asparagine + L-glutamate + AMP + diphosphate + H(+). It functions in the pathway amino-acid biosynthesis; L-asparagine biosynthesis; L-asparagine from L-aspartate (L-Gln route): step 1/1. Essential for nitrogen assimilation, distribution and remobilization within the plant via the phloem. This is Asparagine synthetase [glutamine-hydrolyzing] 1 (ASN1) from Arabidopsis thaliana (Mouse-ear cress).